The primary structure comprises 577 residues: Arginine--tRNA ligase (577 aa).

The 'HIGH' region signature appears at 122–132 (PNVAKEMHVGH).

It belongs to the class-I aminoacyl-tRNA synthetase family. In terms of assembly, monomer.

The protein resides in the cytoplasm. The catalysed reaction is tRNA(Arg) + L-arginine + ATP = L-arginyl-tRNA(Arg) + AMP + diphosphate. The protein is Arginine--tRNA ligase of Haemophilus influenzae (strain 86-028NP).